The following is a 161-amino-acid chain: Nucleotide-binding protein ABO_0048 (161 aa).

This sequence belongs to the YajQ family.

Nucleotide-binding protein. This is Nucleotide-binding protein ABO_0048 from Alcanivorax borkumensis (strain ATCC 700651 / DSM 11573 / NCIMB 13689 / SK2).